We begin with the raw amino-acid sequence, 1401 residues long: MKDLLKFLKAQHKTEEFDAIKIGLASPDQIRSWSFGEVKKPETINYRTFKPERDGLFCARIFGPVKDYECLCGKYKRLKHRGVICEKCGVEVTQTKVRRDRMGHIELASPVAHIWFLKSLPSRIGLLMDIPLRDIERVLYFESYVVTEPGMTDLERSQLLSEEEYLDKLEEFGDEFTAKMGAEAIKDLLASMDMQAEIEDMREELETTNSETKRKKVTKRLKLVEAFVQSGNNPEWMILTVLPVLPPDLRPLVPLDGGRFATSDLNDLYRRVINRNNRLKRLLDLAAPDIIVRNEKRMLQESVDALLDNGRRGRAITGSNKRPLKSLADMIKGKQGRFRQNLLGKRVDYSGRSVITVGPYLRLHQCGLPKKMALELFKPFIYSKLEGRGLATTIKAAKKMVEREEAIVWDILDDVIREHPVLLNRAPTLHRLGIQAFEPVLIEGKAIQLHPLVCAAYNADFDGDQMAVHVPLTLEAQLEARTLMMSTNNILSPASGDPIIVPSQDVVLGLYYMTREKINAKGEGMYLEGFAEAEKAYRTGVAELHARVKVRITEVLRDENGIETRETKLVDTTVGRAMLWQIVPEGLPYSIINQKLGKKQISNLLNEAYRTLGLKDTVVFADQIMYTGFAYAALSGASVGIDDMVIPDAKYTKVADAEEEVKQIQEQYQSGLVTAGERYNKVIDIWAATNEQVAKEMMDNLSSETVLNRDGEEEQQESFNSVYMMADSGARGSAAQIRQLAGMRGLMAKPDGSIIETPITANFREGLNVNQYFISTHGARKGLADTALKTANSGYLTRRLVDVAQDVVVHLDDCGTYEGVTMTPLIEGGDVKEPLHERVLGRVVAEDVLKPGTDEILLPRNTLLDEKQCQIVEENSVDQIKVRSVVSCEADFGCCANCYGRDLARGHMVNQGESVGVIAAQSIGEPGTQLTMRTFHIGGAASTAAADNSIQVKTTGSIKLHNAKHVTNGEGNLVITSRASELTVIDEHGRTKESYKLSYGTILTKKDGDAVNQGDKIASWDPHTMPIITEVQGQVQFVDMIDGVTITTQTDELTGLSSIVVLDAAERASAGKDMRPTVKLVDANGNDIMIPGTEMPAQYFLPGKAIVNLADGGNVGIGETLARIPQASSGTKDITGGLPRVADLFEARKPKEPAILAEHAGIVAFGKETKGKVRLLITRDDNGEVYEEMIHKHRQLNIFEGDKVERGDVISDGPETPHDILRLRGIHAVTEYITNEVQEVYRLQGVKINDKHIETIVRQMLRKCTITHSGDSTFLEGEQLEFANVTIANRQLEAEGKQPARFERDLLGITKASLATESFISAASFQETTRVLTEAAVSGKRDELRGLKENVIVGRLIPAGTGFAYHQERQKQKAVEQEGPSAEQATDNLAALLNAGFSSEE.

Zn(2+) contacts are provided by cysteine 70, cysteine 72, cysteine 85, and cysteine 88. 3 residues coordinate Mg(2+): aspartate 460, aspartate 462, and aspartate 464. 4 residues coordinate Zn(2+): cysteine 814, cysteine 888, cysteine 895, and cysteine 898. The interval 1369–1388 is disordered; sequence RQKQKAVEQEGPSAEQATDN.

Belongs to the RNA polymerase beta' chain family. The RNAP catalytic core consists of 2 alpha, 1 beta, 1 beta' and 1 omega subunit. When a sigma factor is associated with the core the holoenzyme is formed, which can initiate transcription. Mg(2+) serves as cofactor. The cofactor is Zn(2+).

The catalysed reaction is RNA(n) + a ribonucleoside 5'-triphosphate = RNA(n+1) + diphosphate. Functionally, DNA-dependent RNA polymerase catalyzes the transcription of DNA into RNA using the four ribonucleoside triphosphates as substrates. The chain is DNA-directed RNA polymerase subunit beta' from Aliivibrio fischeri (strain ATCC 700601 / ES114) (Vibrio fischeri).